The primary structure comprises 823 residues: Lon protease (823 aa).

Residues 22–217 enclose the Lon N-terminal domain; the sequence is LPLLPVRDVV…KVNEHLNKEH (196 aa). 369–376 contributes to the ATP binding site; it reads GPPGVGKT. In terms of domain architecture, Lon proteolytic spans 605-786; it reads KNEVGIVTGL…DDVLAVALET (182 aa). Active-site residues include Ser692 and Lys735. Residues 788–823 are disordered; that stretch reads PPPPPASEGKPAATVKAPPRRGIAAPRKGAMAGAKS.

The protein belongs to the peptidase S16 family. Homohexamer. Organized in a ring with a central cavity.

The protein resides in the cytoplasm. The catalysed reaction is Hydrolysis of proteins in presence of ATP.. Its function is as follows. ATP-dependent serine protease that mediates the selective degradation of mutant and abnormal proteins as well as certain short-lived regulatory proteins. Required for cellular homeostasis and for survival from DNA damage and developmental changes induced by stress. Degrades polypeptides processively to yield small peptide fragments that are 5 to 10 amino acids long. Binds to DNA in a double-stranded, site-specific manner. The polypeptide is Lon protease (Geobacter metallireducens (strain ATCC 53774 / DSM 7210 / GS-15)).